The sequence spans 142 residues: Ribosome-binding factor A (142 aa).

The segment at 119–142 is disordered; sequence EAKQKQHGVETDAEQGETKDEGDK.

The protein belongs to the RbfA family. In terms of assembly, monomer. Binds 30S ribosomal subunits, but not 50S ribosomal subunits or 70S ribosomes.

Its subcellular location is the cytoplasm. In terms of biological role, one of several proteins that assist in the late maturation steps of the functional core of the 30S ribosomal subunit. Associates with free 30S ribosomal subunits (but not with 30S subunits that are part of 70S ribosomes or polysomes). Required for efficient processing of 16S rRNA. May interact with the 5'-terminal helix region of 16S rRNA. The sequence is that of Ribosome-binding factor A from Shewanella halifaxensis (strain HAW-EB4).